We begin with the raw amino-acid sequence, 298 residues long: Leucine-rich repeat-containing protein 38 (298 aa).

An N-terminal signal peptide occupies residues 1-31; it reads MSLCVAPRHPTGAAAALGLGSLLVLLGPGRA. 2 disulfide bridges follow: cysteine 32–cysteine 38 and cysteine 36–cysteine 46. The LRRNT domain occupies 32–60; sequence CPAGCACTDPHTVDCRDRGLPSVPDPFPL. The Extracellular portion of the chain corresponds to 32-251; that stretch reads CPAGCACTDP…ECKFSLSLTD (220 aa). LRR repeat units lie at residues 61 to 82, 85 to 106, 109 to 130, 133 to 154, and 157 to 177; these read DVRK…FFIF, DLVY…TFSG, KLAF…AFRS, RLVK…AFES, and SLQV…AALD. The N-linked (GlcNAc...) asparagine glycan is linked to asparagine 119. The region spanning 190–245 is the LRRCT domain; that stretch reads NPWLCDCDFAHLFSWIQENTSKLPKGLDAIQCSLPMEDRRVALRELSEASFSECKF. 2 disulfide bridges follow: cysteine 194–cysteine 221 and cysteine 196–cysteine 243. Residues 252 to 272 form a helical membrane-spanning segment; that stretch reads LFIIIFSGVAVSIAAIISSFF. The Cytoplasmic portion of the chain corresponds to 273–298; the sequence is LATVVQCFQRCAPNKDTEDEDDDEDD.

Interacts with KCNMA1.

The protein localises to the cell membrane. Functionally, auxiliary protein of the large-conductance, voltage and calcium-activated potassium channel (BK alpha). Modulates gating properties by producing a marked shift in the BK channel's voltage dependence of activation in the hyperpolarizing direction, and in the absence of calcium. The chain is Leucine-rich repeat-containing protein 38 (Lrrc38) from Mus musculus (Mouse).